A 222-amino-acid chain; its full sequence is Leucyl/phenylalanyl-tRNA--protein transferase (222 aa).

It belongs to the L/F-transferase family.

It localises to the cytoplasm. It catalyses the reaction N-terminal L-lysyl-[protein] + L-leucyl-tRNA(Leu) = N-terminal L-leucyl-L-lysyl-[protein] + tRNA(Leu) + H(+). It carries out the reaction N-terminal L-arginyl-[protein] + L-leucyl-tRNA(Leu) = N-terminal L-leucyl-L-arginyl-[protein] + tRNA(Leu) + H(+). The enzyme catalyses L-phenylalanyl-tRNA(Phe) + an N-terminal L-alpha-aminoacyl-[protein] = an N-terminal L-phenylalanyl-L-alpha-aminoacyl-[protein] + tRNA(Phe). Functionally, functions in the N-end rule pathway of protein degradation where it conjugates Leu, Phe and, less efficiently, Met from aminoacyl-tRNAs to the N-termini of proteins containing an N-terminal arginine or lysine. The chain is Leucyl/phenylalanyl-tRNA--protein transferase from Legionella pneumophila (strain Corby).